A 346-amino-acid polypeptide reads, in one-letter code: STE20-related kinase adapter protein stlk (346 aa).

Residues 10–298 (YKLLEILKNG…ASKLMTHSFL (289 aa)) enclose the Protein kinase domain. ATP is bound by residues 16–24 (LKNGMIGTV) and Lys-38.

It belongs to the protein kinase superfamily. STE Ser/Thr protein kinase family. STE20 subfamily.

This chain is STE20-related kinase adapter protein stlk, found in Drosophila melanogaster (Fruit fly).